Here is a 138-residue protein sequence, read N- to C-terminus: Large ribosomal subunit protein bL19 (138 aa).

The protein belongs to the bacterial ribosomal protein bL19 family.

Its function is as follows. This protein is located at the 30S-50S ribosomal subunit interface and may play a role in the structure and function of the aminoacyl-tRNA binding site. This is Large ribosomal subunit protein bL19 (rplS) from Rickettsia prowazekii (strain Madrid E).